A 414-amino-acid chain; its full sequence is Probable sugar phosphate/phosphate translocator At1g06470 (414 aa).

Helical transmembrane passes span 72 to 92, 101 to 121, 172 to 192, 197 to 217, 224 to 244, 259 to 279, 303 to 323, 328 to 348, and 354 to 374; these read VLKT…LTLY, LGKF…QAVL, TFAT…AFAF, PSLK…LTVA, FWGF…WCMT, FIFM…LSLL, FLML…YVLV, AVTV…VAVF, and FTWL…LFNW. An EamA domain is found at 106–216; the sequence is APLLMNTIHF…VISAGVLLTV (111 aa).

Belongs to the TPT transporter family. TPT (TC 2.A.7.9) subfamily.

It localises to the membrane. This chain is Probable sugar phosphate/phosphate translocator At1g06470, found in Arabidopsis thaliana (Mouse-ear cress).